Reading from the N-terminus, the 139-residue chain is Putative pre-16S rRNA nuclease (139 aa).

The protein belongs to the YqgF nuclease family.

It localises to the cytoplasm. Its function is as follows. Could be a nuclease involved in processing of the 5'-end of pre-16S rRNA. This chain is Putative pre-16S rRNA nuclease, found in Pectobacterium atrosepticum (strain SCRI 1043 / ATCC BAA-672) (Erwinia carotovora subsp. atroseptica).